Here is a 667-residue protein sequence, read N- to C-terminus: tRNA uridine 5-carboxymethylaminomethyl modification enzyme MnmG (667 aa).

An FAD-binding site is contributed by glycine 13–glycine 18. Glycine 280 to phenylalanine 294 contacts NAD(+).

It belongs to the MnmG family. In terms of assembly, homodimer. Heterotetramer of two MnmE and two MnmG subunits. Requires FAD as cofactor.

It localises to the cytoplasm. In terms of biological role, NAD-binding protein involved in the addition of a carboxymethylaminomethyl (cmnm) group at the wobble position (U34) of certain tRNAs, forming tRNA-cmnm(5)s(2)U34. The sequence is that of tRNA uridine 5-carboxymethylaminomethyl modification enzyme MnmG from Polaromonas naphthalenivorans (strain CJ2).